Here is a 547-residue protein sequence, read N- to C-terminus: Mercuric reductase (547 aa).

Residues A5–H70 form the HMA domain. A metal cation is bound by residues C16 and C19. 2 residues coordinate FAD: A96 and T121. Cysteines 122 and 127 form a disulfide. FAD is bound by residues K131, A197, D389, and V397. C544 and C545 together coordinate Hg(2+).

The protein belongs to the class-I pyridine nucleotide-disulfide oxidoreductase family. In terms of assembly, homodimer. FAD is required as a cofactor.

The enzyme catalyses Hg + NADP(+) + H(+) = Hg(2+) + NADPH. In terms of biological role, resistance to Hg(2+) in bacteria appears to be governed by a specialized system which includes mercuric reductase. MerA protein is responsible for volatilizing mercury as Hg(0). The protein is Mercuric reductase (merA) of Acidithiobacillus ferrooxidans (Thiobacillus ferrooxidans).